The sequence spans 480 residues: Adenosylhomocysteinase (480 aa).

Substrate-binding residues include T63, D142, and E203. 204-206 (TTT) contributes to the NAD(+) binding site. Substrate is bound by residues K233 and D237. NAD(+)-binding positions include N238, 267-272 (GYGDVG), E290, N325, 346-348 (IGH), and N394.

Belongs to the adenosylhomocysteinase family. The cofactor is NAD(+).

The protein resides in the cytoplasm. It carries out the reaction S-adenosyl-L-homocysteine + H2O = L-homocysteine + adenosine. The protein operates within amino-acid biosynthesis; L-homocysteine biosynthesis; L-homocysteine from S-adenosyl-L-homocysteine: step 1/1. In terms of biological role, may play a key role in the regulation of the intracellular concentration of adenosylhomocysteine. The polypeptide is Adenosylhomocysteinase (Xylella fastidiosa (strain M12)).